We begin with the raw amino-acid sequence, 145 residues long: Large ribosomal subunit protein uL16 (145 aa).

The protein belongs to the universal ribosomal protein uL16 family. In terms of assembly, part of the 50S ribosomal subunit.

Functionally, binds 23S rRNA and is also seen to make contacts with the A and possibly P site tRNAs. The polypeptide is Large ribosomal subunit protein uL16 (Shouchella clausii (strain KSM-K16) (Alkalihalobacillus clausii)).